Reading from the N-terminus, the 755-residue chain is Actin-related protein 5 (755 aa).

The residue at position 7 (Ser7) is a Phosphoserine. Residue Lys12 forms a Glycyl lysine isopeptide (Lys-Gly) (interchain with G-Cter in ubiquitin) linkage. The residue at position 24 (Thr24) is a Phosphothreonine. Residue Ser383 is modified to Phosphoserine. Residues 418-444 form a disordered region; that stretch reads QRFLKASQDARQKAKEEKERVAKEEEE. Residues 425–444 are compositionally biased toward basic and acidic residues; sequence QDARQKAKEEKERVAKEEEE.

This sequence belongs to the actin family. Component of the chromatin-remodeling INO80 complex, at least composed of ARP4, ARP5, ARP8, RVB1, RVB2, TAF14, NHP10, IES1, IES3, IES4, IES6, ACT1, IES2, IES5 and INO80.

The protein localises to the nucleus. In terms of biological role, probably involved in transcription regulation via its interaction with the INO80 complex, a chromatin remodeling complex. The chain is Actin-related protein 5 (ARP5) from Saccharomyces cerevisiae (strain ATCC 204508 / S288c) (Baker's yeast).